Reading from the N-terminus, the 236-residue chain is (5-formylfuran-3-yl)methyl phosphate synthase (236 aa).

Lys27 (schiff-base intermediate with substrate) is an active-site residue. Catalysis depends on Lys85, which acts as the Proton acceptor.

Belongs to the MfnB family.

The enzyme catalyses 2 D-glyceraldehyde 3-phosphate = 4-(hydroxymethyl)-2-furancarboxaldehyde phosphate + phosphate + 2 H2O. Its pathway is cofactor biosynthesis; methanofuran biosynthesis. Its function is as follows. Catalyzes the formation of 4-(hydroxymethyl)-2-furancarboxaldehyde phosphate (4-HFC-P) from two molecules of glyceraldehyde-3-P (GA-3-P). The polypeptide is (5-formylfuran-3-yl)methyl phosphate synthase (Methanococcus maripaludis (strain DSM 14266 / JCM 13030 / NBRC 101832 / S2 / LL)).